The sequence spans 1126 residues: Carbamoyl phosphate synthase large chain (1126 aa).

The tract at residues 1-402 (MPKRTDIKSV…SLGKAMRSID (402 aa)) is carboxyphosphate synthetic domain. Arginine 129, arginine 169, glycine 175, glycine 176, glutamate 208, isoleucine 210, glutamate 215, glycine 241, valine 242, histidine 243, glutamine 285, and glutamate 299 together coordinate ATP. The ATP-grasp 1 domain maps to 133 to 328 (KKVVEEAGAE…IAKIATKLAL (196 aa)). Residues glutamine 285, glutamate 299, and asparagine 301 each coordinate Mg(2+). Mn(2+) is bound by residues glutamine 285, glutamate 299, and asparagine 301. An oligomerization domain region spans residues 403-551 (KRHMGFNWDG…YYYSCYADET (149 aa)). Positions 552-962 (ELRPRDREAV…AFAKSQLAAY (411 aa)) are carbamoyl phosphate synthetic domain. Residues 681-881 (GEVLKKADMN…LAKAAARIMV (201 aa)) form the ATP-grasp 2 domain. The ATP site is built by arginine 717, lysine 765, leucine 767, glutamate 772, glycine 797, valine 798, histidine 799, serine 800, glutamine 840, and glutamate 852. The Mg(2+) site is built by glutamine 840, glutamate 852, and asparagine 854. Mn(2+) is bound by residues glutamine 840, glutamate 852, and asparagine 854. The allosteric domain stretch occupies residues 963–1126 (EGGLPTSGNV…TQLFELESRD (164 aa)). The MGS-like domain occupies 964-1126 (GGLPTSGNVF…TQLFELESRD (163 aa)).

The protein belongs to the CarB family. In terms of assembly, composed of two chains; the small (or glutamine) chain promotes the hydrolysis of glutamine to ammonia, which is used by the large (or ammonia) chain to synthesize carbamoyl phosphate. Tetramer of heterodimers (alpha,beta)4. Mg(2+) is required as a cofactor. Mn(2+) serves as cofactor.

It carries out the reaction hydrogencarbonate + L-glutamine + 2 ATP + H2O = carbamoyl phosphate + L-glutamate + 2 ADP + phosphate + 2 H(+). It catalyses the reaction hydrogencarbonate + NH4(+) + 2 ATP = carbamoyl phosphate + 2 ADP + phosphate + 2 H(+). The protein operates within amino-acid biosynthesis; L-arginine biosynthesis; carbamoyl phosphate from bicarbonate: step 1/1. Its pathway is pyrimidine metabolism; UMP biosynthesis via de novo pathway; (S)-dihydroorotate from bicarbonate: step 1/3. Functionally, large subunit of the glutamine-dependent carbamoyl phosphate synthetase (CPSase). CPSase catalyzes the formation of carbamoyl phosphate from the ammonia moiety of glutamine, carbonate, and phosphate donated by ATP, constituting the first step of 2 biosynthetic pathways, one leading to arginine and/or urea and the other to pyrimidine nucleotides. The large subunit (synthetase) binds the substrates ammonia (free or transferred from glutamine from the small subunit), hydrogencarbonate and ATP and carries out an ATP-coupled ligase reaction, activating hydrogencarbonate by forming carboxy phosphate which reacts with ammonia to form carbamoyl phosphate. The polypeptide is Carbamoyl phosphate synthase large chain (Bifidobacterium adolescentis (strain ATCC 15703 / DSM 20083 / NCTC 11814 / E194a)).